The following is a 214-amino-acid chain: Octanoyltransferase (214 aa).

The 183-residue stretch at 28-210 (GTAEDALYLL…EFGKVFTDTA (183 aa)) folds into the BPL/LPL catalytic domain. Substrate contacts are provided by residues 73-80 (RGGNITCH), 140-142 (SIG), and 153-155 (GLS). Cysteine 171 serves as the catalytic Acyl-thioester intermediate.

This sequence belongs to the LipB family.

Its subcellular location is the cytoplasm. It catalyses the reaction octanoyl-[ACP] + L-lysyl-[protein] = N(6)-octanoyl-L-lysyl-[protein] + holo-[ACP] + H(+). It functions in the pathway protein modification; protein lipoylation via endogenous pathway; protein N(6)-(lipoyl)lysine from octanoyl-[acyl-carrier-protein]: step 1/2. Catalyzes the transfer of endogenously produced octanoic acid from octanoyl-acyl-carrier-protein onto the lipoyl domains of lipoate-dependent enzymes. Lipoyl-ACP can also act as a substrate although octanoyl-ACP is likely to be the physiological substrate. In Maridesulfovibrio salexigens (strain ATCC 14822 / DSM 2638 / NCIMB 8403 / VKM B-1763) (Desulfovibrio salexigens), this protein is Octanoyltransferase.